The primary structure comprises 316 residues: MFGRVFNRSSPIIRLSVRTITSLNGARASVNRPLAKTLISNGNHIFNKKLYLLGLFGITSGYYFTISNGGSAIINDENVNDDASKTVSVDSSISPLPVNYSKNEYSLSNDYSLLGYGIRAVTFLKFKIYALGIYVADEDIKSIAKLFSTSYLSSTFIDTDKSKSHPENVKEALNDPKKSLILIGNLLDSGIKMMAKITPVRNTDFNHLRDGITKTVLNHPNANEKKTELENGLAQLKETLSNKGSVAKNDDLFIELKSNGSLVFTHNNRKKNKAIHLGTVTDPIVGKFLFSQYIGGPKPLSPPTKETVTDKIYSIV.

A mitochondrion-targeting transit peptide spans 1-41 (MFGRVFNRSSPIIRLSVRTITSLNGARASVNRPLAKTLISN).

This sequence belongs to the AIM18/AIM46 family.

It localises to the mitochondrion. This chain is Altered inheritance of mitochondria protein 18, mitochondrial (AIM18), found in Vanderwaltozyma polyspora (strain ATCC 22028 / DSM 70294 / BCRC 21397 / CBS 2163 / NBRC 10782 / NRRL Y-8283 / UCD 57-17) (Kluyveromyces polysporus).